We begin with the raw amino-acid sequence, 216 residues long: UDP-N-acetylglucosamine transferase subunit ALG14 (216 aa).

Over 1–3 the chain is Lumenal; sequence MVC. Residues 4–24 traverse the membrane as a helical segment; sequence VLTLAASAGGLAVLLIVRLWA. The Cytoplasmic portion of the chain corresponds to 25 to 216; that stretch reads VLRSHPVTPR…PKSVYLGRIV (192 aa).

This sequence belongs to the ALG14 family. As to quaternary structure, forms with ALG13 the active heterodimeric UDP-N-acetylglucosamine transferase complex.

Its subcellular location is the endoplasmic reticulum membrane. Functionally, part of the UDP-N-acetylglucosamine transferase complex that operates in the biosynthetic pathway of dolichol-linked oligosaccharides, the glycan precursors employed in protein asparagine (N)-glycosylation. The assembly of dolichol-linked oligosaccharides begins on the cytosolic side of the endoplasmic reticulum membrane and finishes in its lumen. The sequential addition of sugars to dolichol pyrophosphate produces dolichol-linked oligosaccharides containing fourteen sugars, including two GlcNAcs, nine mannoses and three glucoses. Once assembled, the oligosaccharides are transferred from the lipid to nascent proteins by oligosaccharyltransferases. Functions as a protein-membrane adapter recruiting ALG13 at the cytoplasmic face of the endoplasmic reticulum, where the complex catalyzes the second step of dolichol pyrophosphate biosynthesis, transferring a beta1,4-linked N-acetylglucosamine (GlcNAc) from UDP-GlcNAc to GlcNAc-pyrophosphatedolichol (Gn-PDol) to produce N,N'-diacetylchitobiosyl diphosphodolichol. N,N'-diacetylchitobiosyl diphosphodolichol is a substrate for ALG1, the following enzyme in the biosynthetic pathway. This is UDP-N-acetylglucosamine transferase subunit ALG14 from Rattus norvegicus (Rat).